The sequence spans 113 residues: Protein AaeX (113 aa).

2 consecutive transmembrane segments (helical) span residues 3–23 and 43–63; these read LLPV…EMIL and FVWH…YLIS.

This sequence belongs to the AaeX family.

Its subcellular location is the cell membrane. The chain is Protein AaeX from Sodalis glossinidius (strain morsitans).